A 236-amino-acid chain; its full sequence is 2-C-methyl-D-erythritol 4-phosphate cytidylyltransferase (236 aa).

Belongs to the IspD/TarI cytidylyltransferase family. IspD subfamily. In terms of assembly, homodimer.

It carries out the reaction 2-C-methyl-D-erythritol 4-phosphate + CTP + H(+) = 4-CDP-2-C-methyl-D-erythritol + diphosphate. It functions in the pathway isoprenoid biosynthesis; isopentenyl diphosphate biosynthesis via DXP pathway; isopentenyl diphosphate from 1-deoxy-D-xylulose 5-phosphate: step 2/6. Catalyzes the formation of 4-diphosphocytidyl-2-C-methyl-D-erythritol from CTP and 2-C-methyl-D-erythritol 4-phosphate (MEP). This is 2-C-methyl-D-erythritol 4-phosphate cytidylyltransferase from Salmonella schwarzengrund (strain CVM19633).